We begin with the raw amino-acid sequence, 284 residues long: Tropomyosin (284 aa).

Positions 1 to 39 (MDAIKKKMQAMKLEKDNAMDRADTLEQQNKEANIRAEKT) are disordered. The stretch at 1 to 284 (MDAIKKKMQA…DQTFSELSGY (284 aa)) forms a coiled coil. The span at 12–39 (KLEKDNAMDRADTLEQQNKEANIRAEKT) shows a compositional bias: basic and acidic residues.

This sequence belongs to the tropomyosin family. In terms of assembly, homodimer.

Tropomyosin, in association with the troponin complex, plays a central role in the calcium dependent regulation of muscle contraction. The sequence is that of Tropomyosin (TM1) from Homarus americanus (American lobster).